A 321-amino-acid chain; its full sequence is Annexin D3 (321 aa).

Ala2 bears the N-acetylalanine mark. 4 Annexin repeats span residues 11–82 (PSPA…SWTY), 83–159 (DPAE…TLAS), 171–243 (EVAT…VAIF), and 247–318 (TPEK…TLLG). Residues Gly26, Gly28, and Glu68 each coordinate Ca(2+). Thr117 carries the post-translational modification Phosphothreonine. Ca(2+) contacts are provided by Ile260 and Gly264. A Phosphotyrosine modification is found at Tyr289. Position 304 (Asp304) interacts with Ca(2+).

Belongs to the annexin (TC 1.A.31.1) family. As to expression, expressed mainly in roots and flowers. Lower in stems and leaves.

In Arabidopsis thaliana (Mouse-ear cress), this protein is Annexin D3 (ANN3).